A 61-amino-acid polypeptide reads, in one-letter code: Conotoxin Am14.1 (61 aa).

Propeptides lie at residues 1–19 and 52–61; these read MLSV…HLPR and KRDLDLFTDQ.

Mostly non-hydroxylated. In terms of processing, contains 2 disulfide bonds. Expressed by the venom duct.

The protein resides in the secreted. In terms of biological role, probable toxin that inhibits ion channels. This chain is Conotoxin Am14.1, found in Conus amadis (Amadis cone).